The following is a 175-amino-acid chain: Co-chaperone protein HscB homolog (175 aa).

The J domain maps to 2–74; the sequence is NYFQLFNIEV…LQRAEYILVQ (73 aa).

It belongs to the HscB family. As to quaternary structure, interacts with HscA and stimulates its ATPase activity.

Its function is as follows. Co-chaperone involved in the maturation of iron-sulfur cluster-containing proteins. Seems to help targeting proteins to be folded toward HscA. This chain is Co-chaperone protein HscB homolog, found in Colwellia psychrerythraea (strain 34H / ATCC BAA-681) (Vibrio psychroerythus).